The chain runs to 116 residues: Aspartate 1-decarboxylase (116 aa).

Ser-25 acts as the Schiff-base intermediate with substrate; via pyruvic acid in catalysis. Ser-25 carries the post-translational modification Pyruvic acid (Ser). Residue Thr-57 participates in substrate binding. The active-site Proton donor is Tyr-58. Residue 73–75 (GPA) participates in substrate binding.

The protein belongs to the PanD family. Heterooctamer of four alpha and four beta subunits. It depends on pyruvate as a cofactor. Post-translationally, is synthesized initially as an inactive proenzyme, which is activated by self-cleavage at a specific serine bond to produce a beta-subunit with a hydroxyl group at its C-terminus and an alpha-subunit with a pyruvoyl group at its N-terminus.

It is found in the cytoplasm. It catalyses the reaction L-aspartate + H(+) = beta-alanine + CO2. It participates in cofactor biosynthesis; (R)-pantothenate biosynthesis; beta-alanine from L-aspartate: step 1/1. Catalyzes the pyruvoyl-dependent decarboxylation of aspartate to produce beta-alanine. The chain is Aspartate 1-decarboxylase from Flavobacterium psychrophilum (strain ATCC 49511 / DSM 21280 / CIP 103535 / JIP02/86).